The chain runs to 305 residues: Putative S-adenosyl-L-methionine-dependent methyltransferase MAB_3787 (305 aa).

S-adenosyl-L-methionine is bound by residues Asp-132 and 161-162 (DL).

The protein belongs to the UPF0677 family.

In terms of biological role, exhibits S-adenosyl-L-methionine-dependent methyltransferase activity. This chain is Putative S-adenosyl-L-methionine-dependent methyltransferase MAB_3787, found in Mycobacteroides abscessus (strain ATCC 19977 / DSM 44196 / CCUG 20993 / CIP 104536 / JCM 13569 / NCTC 13031 / TMC 1543 / L948) (Mycobacterium abscessus).